Reading from the N-terminus, the 374-residue chain is P2Y purinoceptor 11 (374 aa).

The Extracellular segment spans residues 1-29 (MAANVSGAKSCPANFLAAADDKLSGFQGD). Asn-4 carries N-linked (GlcNAc...) asparagine glycosylation. Residues 30–50 (FLWPILVVEFLVAVASNGLAL) traverse the membrane as a helical segment. Residues 51-64 (YRFSIRKQRPWHPA) are Cytoplasmic-facing. The helical transmembrane segment at 65–85 (VVFSVQLAVSDLLCALTLPPL) threads the bilayer. Topologically, residues 86–116 (AAYLYPPKHWRYGEAACRLERFLFTCNLLGS) are extracellular. A disulfide bridge links Cys-102 with Cys-180. The helical transmembrane segment at 117–137 (VIFITCISLNRYLGIVHPFFA) threads the bilayer. At 138 to 146 (RSHLRPKHA) the chain is on the cytoplasmic side. Residues 147 to 167 (WAVSAAGWVLAALLAMPTLSF) form a helical membrane-spanning segment. At 168–206 (SHLKRPQQGAGNCSVARPEACIKCLGTADHGLAAYRAYS) the chain is on the extracellular side. An N-linked (GlcNAc...) asparagine glycan is attached at Asn-179. The chain crosses the membrane as a helical span at residues 207 to 227 (LVLAGLGCGLPLLLTLAAYGA). The Cytoplasmic segment spans residues 228–245 (LGRAVLRSPGMTVAEKLR). A helical membrane pass occupies residues 246 to 266 (VAALVASGVALYASSYVPYHI). The Extracellular segment spans residues 267–308 (MRVLNVDARRRWSTRCPSFADIAQATAALELGPYVGYQVMRG). A helical membrane pass occupies residues 309-329 (LMPLAFCVHPLLYMAAVPSLG). The Cytoplasmic portion of the chain corresponds to 330–374 (CCCRHCPGYRDSWNPEDAKSTGQALPLNATAAPKPSEPQSRELSQ). Residues 345 to 374 (EDAKSTGQALPLNATAAPKPSEPQSRELSQ) form a disordered region.

This sequence belongs to the G-protein coupled receptor 1 family. In terms of tissue distribution, highest expression in liver and spleen.

It localises to the cell membrane. Functionally, receptor for ATP and ADP coupled to G-proteins that activate both phosphatidylinositol-calcium and adenylyl cyclase second messenger systems. Not activated by UTP or UDP. This chain is P2Y purinoceptor 11 (P2RY11), found in Homo sapiens (Human).